An 80-amino-acid chain; its full sequence is MPAIEVGRVCIKTAGREAGKVCVIVDILDKNFVIVDGLVKRRRCNIKHLEPTEKKVDIPKGASTEEVKLALDAAGLLKEE.

The protein belongs to the eukaryotic ribosomal protein eL14 family.

This chain is Large ribosomal subunit protein eL14, found in Methanocaldococcus jannaschii (strain ATCC 43067 / DSM 2661 / JAL-1 / JCM 10045 / NBRC 100440) (Methanococcus jannaschii).